The primary structure comprises 146 residues: Dihydroneopterin aldolase 1 (146 aa).

Residues E41, Y73, and 92 to 93 (LE) each bind substrate. K119 acts as the Proton donor/acceptor in catalysis.

Belongs to the DHNA family. As to quaternary structure, homooctamer. Forms a hollow cylinder assembled from two ring-shaped tetramers. In terms of tissue distribution, expressed in roots, leaves, stems and siliques.

It catalyses the reaction 7,8-dihydroneopterin = 6-hydroxymethyl-7,8-dihydropterin + glycolaldehyde. Its pathway is cofactor biosynthesis; tetrahydrofolate biosynthesis; 2-amino-4-hydroxy-6-hydroxymethyl-7,8-dihydropteridine diphosphate from 7,8-dihydroneopterin triphosphate: step 3/4. Functionally, catalyzes the conversion of 7,8-dihydroneopterin into 6-hydroxymethyl-7,8-dihydropterin, a biosynthetic precursor of the vitamin tetrahydrofolate. Can use L-threo-dihydroneopterin and D-erythro-dihydroneopterin as substrates for the formation of 6-hydroxymethyldihydropterin, but it can also catalyze the epimerization of carbon 2' of dihydroneopterin and dihydromonapterin. This is Dihydroneopterin aldolase 1 from Arabidopsis thaliana (Mouse-ear cress).